A 380-amino-acid chain; its full sequence is Protein neprosin (380 aa).

An N-terminal signal peptide occupies residues Met-1–Ala-24. Positions Arg-25–Pro-128 are cleaved as a propeptide — activation peptide. A disulfide bridge connects residues Cys-52 and Cys-98. 3 N-linked (GlcNAc...) asparagine glycosylation sites follow: Asn-68, Asn-145, and Asn-152. Residues Ser-129 to Gln-380 enclose the Neprosin PEP catalytic domain. Residue Glu-188 is part of the active site. A disulfide bridge links Cys-219 with Cys-224. N-linked (GlcNAc...) asparagine glycosylation occurs at Asn-253. Glu-297 is a catalytic residue. Cys-358 and Cys-379 are oxidised to a cystine.

Belongs to the peptidase G3 family.

The protein localises to the secreted. It catalyses the reaction Hydrolysis of Pro-|-Xaa &gt;&gt; Ala-|-Xaa in oligopeptides.. With respect to regulation, weakly inhibited by the aspartic protease inhibitor pepstatin. Weakly inhibited by pepstatin A (IC(50) of 140 uM) and 1,2-epoxy-3-(p-nitrophenoxy)propane (EPNP) (IC(50) of 480 uM). Activity is not affected by the POP inhibitor Z-Pro-prolinal inhibitor or the denaturant urea. Functionally, glutamic endopeptidase that preferentially cleaves peptide bonds on the C-terminal side of proline residues. Also cleaves peptide bonds on the C-terminal side of alanine residues but with less efficiency. In contrast to most proline-cleaving enzymes, effectively degrades proteins of any size. Found in the viscoelastic fluid of the pitcher, and so likely functions in the digestion of their prey. This Nepenthes x ventrata (Red tropical pitcher plant) protein is Protein neprosin.